The primary structure comprises 1039 residues: L-arabinokinase (1039 aa).

Residues 662–678 (AAYVAGTILVLMIELGV) form a helical membrane-spanning segment. Residue 693 to 703 (PEGKGVSSSAA) participates in ATP binding. Aspartate 745 acts as the Proton acceptor in catalysis.

The protein belongs to the GHMP kinase family.

It is found in the membrane. The catalysed reaction is L-arabinose + ATP = beta-L-arabinose 1-phosphate + ADP + H(+). In terms of biological role, arabinose kinase. Involved in the salvage pathway which converts free L-arabinose to UDP-L-arabinose. May play a role in arabinose transport. The sequence is that of L-arabinokinase (ARA1) from Arabidopsis thaliana (Mouse-ear cress).